The primary structure comprises 493 residues: Glutamate--tRNA ligase (493 aa).

The 'HIGH' region motif lies at 9 to 19 (PSPTGFVHIGS). A 'KMSKS' region motif is present at residues 258–262 (KLSKR). ATP is bound at residue lysine 261.

This sequence belongs to the class-I aminoacyl-tRNA synthetase family. Glutamate--tRNA ligase type 1 subfamily. Monomer.

It localises to the cytoplasm. It carries out the reaction tRNA(Glu) + L-glutamate + ATP = L-glutamyl-tRNA(Glu) + AMP + diphosphate. In terms of biological role, catalyzes the attachment of glutamate to tRNA(Glu) in a two-step reaction: glutamate is first activated by ATP to form Glu-AMP and then transferred to the acceptor end of tRNA(Glu). This is Glutamate--tRNA ligase from Clostridioides difficile (strain 630) (Peptoclostridium difficile).